We begin with the raw amino-acid sequence, 331 residues long: CMRF35-like molecule 9 (331 aa).

An N-terminal signal peptide occupies residues 1-18 (MRPLVLLWGCLVLPGYEA). An Ig-like V-type domain is found at 19–120 (LKGPKEISGF…LGRDESFEVT (102 aa)). Residues 19–204 (LKGPKEISGF…KPSVSIPMVR (186 aa)) are Extracellular-facing. Cys37 and Cys106 are disulfide-bonded. O-linked (GalNAc...) threonine glycosylation occurs at Thr136. Residue Ser140 is glycosylated (O-linked (GalNAc...) serine). The O-linked (GalNAc...) threonine glycan is linked to Thr143. O-linked (GalNAc...) serine glycosylation occurs at Ser145. Residues Thr150 and Thr152 are each glycosylated (O-linked (GalNAc...) threonine). Ser154 is a glycosylation site (O-linked (GalNAc...) serine). O-linked (GalNAc...) threonine glycosylation is found at Thr164, Thr181, and Thr182. O-linked (GalNAc...) serine glycosylation occurs at Ser186. A helical membrane pass occupies residues 205–225 (MMAPVLILLSLLLAAGLIAFG). The Cytoplasmic portion of the chain corresponds to 226-331 (SHMLRWRKKA…ELAFSEFISV (106 aa)). Polar residues predominate over residues 278–293 (NPSAVPSPETQNLSQS). A disordered region spans residues 278–318 (NPSAVPSPETQNLSQSTEEEEAARSLDDDKEDVMAPPPLQM).

This sequence belongs to the CD300 family. O-glycosylated with sialylated oligosaccharides. Expressed in monocyte cell lines. Expressed in certain types of endothelial and myeloid lineage cells. Expressed in mesenteric lymph nodes (LNs), spleen, thymus, lung, heart and kidney. Expressed in high endothelial venules (HEVs) in peripheral and mesenteric LNs (at protein level). Highly expressed in heart. Slightly expressed in spleen and thymus. Isoform 5 is expressed preferentially in heart. Isoform 1 is expressed predominantly in kidney and liver.

It localises to the apical cell membrane. Its subcellular location is the basolateral cell membrane. The protein localises to the endosome. It is found in the multivesicular body membrane. Its function is as follows. Receptor which may mediate L-selectin-dependent lymphocyte rollings. Binds SELL in a calcium dependent manner. Binds lymphocyte. This chain is CMRF35-like molecule 9 (Cd300lg), found in Mus musculus (Mouse).